A 124-amino-acid polypeptide reads, in one-letter code: Protein MGF 110-4L (124 aa).

Residues Met1 to Gly18 form the signal peptide. Residue Asn64 is glycosylated (N-linked (GlcNAc...) asparagine; by host). The Prevents secretion from ER signature appears at Lys121–Leu124.

The protein belongs to the asfivirus MGF 110 family.

It is found in the virion. The protein localises to the host endoplasmic reticulum-Golgi intermediate compartment. Its function is as follows. Causes the redistribution of lumenal ER protein to an enlarged ERGIC compartment. This is Protein MGF 110-4L from Ornithodoros (relapsing fever ticks).